The sequence spans 175 residues: Phosphopantetheine adenylyltransferase (175 aa).

Position 10 (Ser10) interacts with substrate. ATP is bound by residues 10-11 and His18; that span reads SF. Substrate is bound by residues Lys42, Leu74, and Arg88. Residues 89 to 91, Glu99, and 124 to 130 each bind ATP; these read GMR and WIFTSSS.

This sequence belongs to the bacterial CoaD family. As to quaternary structure, homohexamer. Mg(2+) is required as a cofactor.

It localises to the cytoplasm. It carries out the reaction (R)-4'-phosphopantetheine + ATP + H(+) = 3'-dephospho-CoA + diphosphate. It participates in cofactor biosynthesis; coenzyme A biosynthesis; CoA from (R)-pantothenate: step 4/5. Its function is as follows. Reversibly transfers an adenylyl group from ATP to 4'-phosphopantetheine, yielding dephospho-CoA (dPCoA) and pyrophosphate. The chain is Phosphopantetheine adenylyltransferase from Desulfatibacillum aliphaticivorans.